Consider the following 159-residue polypeptide: Ribosomal RNA large subunit methyltransferase H (159 aa).

S-adenosyl-L-methionine-binding positions include L76, G108, and 127-132 (FSKMTF).

Belongs to the RNA methyltransferase RlmH family. Homodimer.

Its subcellular location is the cytoplasm. The enzyme catalyses pseudouridine(1915) in 23S rRNA + S-adenosyl-L-methionine = N(3)-methylpseudouridine(1915) in 23S rRNA + S-adenosyl-L-homocysteine + H(+). In terms of biological role, specifically methylates the pseudouridine at position 1915 (m3Psi1915) in 23S rRNA. This chain is Ribosomal RNA large subunit methyltransferase H, found in Clostridium novyi (strain NT).